The chain runs to 811 residues: G-type lectin S-receptor-like serine/threonine-protein kinase LECRK2 (811 aa).

The N-terminal stretch at 1 to 23 (MAPILFLPILQILLIYCTKSAQA) is a signal peptide. The 130-residue stretch at 24-153 (QLNISIGSSL…DGATKWESFG (130 aa)) folds into the Bulb-type lectin domain. Residues 24-464 (QLNISIGSSL…DKKYWILGSS (441 aa)) are Extracellular-facing. 7 N-linked (GlcNAc...) asparagine glycosylation sites follow: asparagine 26, asparagine 39, asparagine 59, asparagine 219, asparagine 226, asparagine 237, and asparagine 242. Positions 292 to 344 (PENICQTIQTKVGSGACGFNSYCTFDGTKNTTNCLCPQRYKFFDNERTYKGCR) constitute an EGF-like; atypical domain. Intrachain disulfides connect cysteine 296-cysteine 314, cysteine 308-cysteine 325, cysteine 327-cysteine 343, cysteine 389-cysteine 411, and cysteine 393-cysteine 399. The N-linked (GlcNAc...) asparagine glycan is linked to asparagine 321. A PAN domain is found at 352-436 (CDLDETAAMV…LQATVLLKVP (85 aa)). The helical transmembrane segment at 465-485 (LFFGSSVLVNFLLIFVLLFGT) threads the bilayer. Topologically, residues 486–811 (YCSITSRKKT…DPSSYISSLA (326 aa)) are cytoplasmic. The 275-residue stretch at 521–795 (GGFHEVLGTG…KVMQMLDGAV (275 aa)) folds into the Protein kinase domain. ATP is bound by residues 527–535 (LGTGASGIV) and lysine 551. The active-site Proton acceptor is aspartate 645.

This sequence belongs to the protein kinase superfamily. Ser/Thr protein kinase family.

It localises to the membrane. The enzyme catalyses L-seryl-[protein] + ATP = O-phospho-L-seryl-[protein] + ADP + H(+). It catalyses the reaction L-threonyl-[protein] + ATP = O-phospho-L-threonyl-[protein] + ADP + H(+). Involved in resistance against the herbivorous insect brown planthopper (N.lugens, BPH). Member of the BPH3 (BPH resistance locus 3) cluster which contains LECRK1, LECRK2 and LECRK3. This Oryza sativa subsp. indica (Rice) protein is G-type lectin S-receptor-like serine/threonine-protein kinase LECRK2.